We begin with the raw amino-acid sequence, 838 residues long: Lymphoid-specific helicase (838 aa).

A coiled-coil region spans residues 30 to 115; the sequence is MLEEEEQLEA…SLKVKKGKNS (86 aa). Residues 94–108 show a composition bias toward basic and acidic residues; that stretch reads QKKKEKLERKKESLK. The disordered stretch occupies residues 94 to 135; sequence QKKKEKLERKKESLKVKKGKNSIDASEEKPVMRKKRGREDES. A Phosphoserine modification is found at S115. Over residues 119 to 134 the composition is skewed to basic and acidic residues; the sequence is SEEKPVMRKKRGREDE. Residues 235–403 enclose the Helicase ATP-binding domain; the sequence is RMLWENGING…WSLLNFLLPD (169 aa). Residue 248 to 255 participates in ATP binding; sequence DEMGLGKT. The DEAH box motif lies at 354 to 357; that stretch reads DEGH. Phosphoserine is present on residues S503 and S515. One can recognise a Helicase C-terminal domain in the interval 603–767; the sequence is ILDRMLPELK…GLNLSKNFLD (165 aa).

Belongs to the SNF2/RAD54 helicase family. In terms of tissue distribution, highly expressed in proliferative tissues such as adult thymus and testis, and expressed at lower levels in uterus, small intestine, colon, and peripheral blood mononuclear cells. Also expressed in neoplastic cell lines including those derived from myeloid and lymphoid leukemias.

The protein resides in the nucleus. Its function is as follows. Plays an essential role in normal development and survival. Involved in regulation of the expansion or survival of lymphoid cells. Required for de novo or maintenance DNA methylation. May control silencing of the imprinted CDKN1C gene through DNA methylation. May play a role in formation and organization of heterochromatin, implying a functional role in the regulation of transcription and mitosis. In Homo sapiens (Human), this protein is Lymphoid-specific helicase.